The primary structure comprises 251 residues: Regulator of G-protein signaling 7-binding protein B (251 aa).

The interval 1-43 (MCSAPNGRKNRPRSAANIFQIGKSSVRDPERRESTESARRAQR) is disordered. Positions 25-43 (SVRDPERRESTESARRAQR) are enriched in basic and acidic residues. 2 S-palmitoyl cysteine lipidation sites follow: cysteine 246 and cysteine 247.

The protein belongs to the RGS7BP/RGS9BP family. Palmitoylated. Undergoes rapid palmitoylation turnover. Palmitoylation regulates the cell membrane and nuclear shuttling and the regulation of GPCR signaling. Upon depalmitoylation, it is targeted from the plasma membrane into the nucleus. GPCR signaling inhibits depalmitoylation and promotes localization to the plasma membrane.

The protein resides in the nucleus. It is found in the cytoplasm. The protein localises to the cell membrane. In terms of biological role, regulator of G protein-coupled receptor (GPCR) signaling. Regulatory subunit of the R7-Gbeta5 complexes that acts by controlling the subcellular location of the R7-Gbeta5 complexes. When palmitoylated, it targets the R7-Gbeta5 complexes to the plasma membrane, leading to inhibit G protein alpha subunits. When it is unpalmitoylated, the R7-Gbeta5 complexes undergo a nuclear/cytoplasmic shuttling. The polypeptide is Regulator of G-protein signaling 7-binding protein B (rgs7bpb) (Danio rerio (Zebrafish)).